The sequence spans 365 residues: tRNA/tmRNA (uracil-C(5))-methyltransferase (365 aa).

Residues glutamine 189, tyrosine 217, asparagine 222, glutamate 238, and aspartate 298 each contribute to the S-adenosyl-L-methionine site. Cysteine 323 serves as the catalytic Nucleophile. Residue glutamate 357 is the Proton acceptor of the active site.

It belongs to the class I-like SAM-binding methyltransferase superfamily. RNA M5U methyltransferase family. TrmA subfamily.

The catalysed reaction is uridine(54) in tRNA + S-adenosyl-L-methionine = 5-methyluridine(54) in tRNA + S-adenosyl-L-homocysteine + H(+). The enzyme catalyses uridine(341) in tmRNA + S-adenosyl-L-methionine = 5-methyluridine(341) in tmRNA + S-adenosyl-L-homocysteine + H(+). Its function is as follows. Dual-specificity methyltransferase that catalyzes the formation of 5-methyluridine at position 54 (m5U54) in all tRNAs, and that of position 341 (m5U341) in tmRNA (transfer-mRNA). The sequence is that of tRNA/tmRNA (uracil-C(5))-methyltransferase from Shewanella sp. (strain W3-18-1).